The following is a 522-amino-acid chain: Leucine-rich repeat transmembrane neuronal protein 1 (522 aa).

Residues 1 to 34 (MDFLLLGLCLHWLLRRPSGVVLCLLGACFQMLPA) form the signal peptide. The 29-residue stretch at 35 to 63 (APSGCPGQCRCEGRLLYCEALNLTEAPHN) folds into the LRRNT domain. Residues 35–427 (APSGCPGQCR…HAENAVQIHK (393 aa)) lie on the Extracellular side of the membrane. N-linked (GlcNAc...) asparagine glycosylation is found at asparagine 56 and asparagine 63. LRR repeat units lie at residues 64–87 (LSGL…QFTG), 89–111 (MQLT…AFQK), 112–135 (LRRV…TFRP), 136–159 (MPNL…LFHG), 161–183 (RKLT…IFQD), 184–207 (CRSL…SFAG), 209–231 (FKLT…HFPR), 233–255 (ISLH…LDWV), 256–278 (WNLE…VFET), and 280–302 (PYLQ…ILNS). N-linked (GlcNAc...) asparagine glycosylation occurs at asparagine 130. One can recognise an LRRCT domain in the interval 314 to 365 (NLWDCGRNVCALASWLSNFQGRYDANLQCASPEYAQGEDVLDAVYAFHLCED). Residue asparagine 381 is glycosylated (N-linked (GlcNAc...) asparagine). The helical transmembrane segment at 428-448 (VVTGTMALIFSFLIVVLVLYV) threads the bilayer. At 449 to 522 (SWKCFPASLR…HQQPARECEV (74 aa)) the chain is on the cytoplasmic side.

Belongs to the LRRTM family. Expressed predominantly in the nervous system by postmitotic neurons, but also in some non-neuronal tissues. In adult brain expression is most prominent in the forebraain, particularly in the thalamus and in the cortical areas including hippocampus, piriform and posterior cingulate.

It localises to the cell membrane. The protein resides in the postsynaptic cell membrane. Functionally, exhibits strong synaptogenic activity, restricted to excitatory presynaptic differentiation, acting at both pre- and postsynaptic level. This chain is Leucine-rich repeat transmembrane neuronal protein 1 (Lrrtm1), found in Mus musculus (Mouse).